The following is a 178-amino-acid chain: Interleukin-10 (178 aa).

The N-terminal stretch at 1 to 18 is a signal peptide; sequence MHSSALLCCLVFLTGVRA. Intrachain disulfides connect C30–C126 and C80–C132. N-linked (GlcNAc...) asparagine glycosylation is present at N134.

The protein belongs to the IL-10 family. As to quaternary structure, homodimer. Interacts with IL10RA and IL10RB.

The protein resides in the secreted. In terms of biological role, major immune regulatory cytokine that acts on many cells of the immune system where it has profound anti-inflammatory functions, limiting excessive tissue disruption caused by inflammation. Mechanistically, IL10 binds to its heterotetrameric receptor comprising IL10RA and IL10RB leading to JAK1 and STAT2-mediated phosphorylation of STAT3. In turn, STAT3 translocates to the nucleus where it drives expression of anti-inflammatory mediators. Targets antigen-presenting cells (APCs) such as macrophages and monocytes and inhibits their release of pro-inflammatory cytokines including granulocyte-macrophage colony-stimulating factor /GM-CSF, granulocyte colony-stimulating factor/G-CSF, IL-1 alpha, IL-1 beta, IL-6, IL-8 and TNF-alpha. Also interferes with antigen presentation by reducing the expression of MHC-class II and co-stimulatory molecules, thereby inhibiting their ability to induce T cell activation. In addition, controls the inflammatory response of macrophages by reprogramming essential metabolic pathways including mTOR signaling. In Callithrix jacchus (White-tufted-ear marmoset), this protein is Interleukin-10 (IL10).